Here is a 1187-residue protein sequence, read N- to C-terminus: Non-receptor tyrosine-protein kinase TYK2 (1187 aa).

In terms of domain architecture, FERM spans 26–431 (GGLKVLLHWA…GYFRLTADSS (406 aa)). Tyr292 is subject to Phosphotyrosine. The interval 335–366 (KEEGSSGSSGRNPQASLFGKKAKAHKAVGQPA) is disordered. The span at 339–349 (SSGSSGRNPQA) shows a compositional bias: polar residues. Positions 450–529 (GIHGPLLEPF…GRSFPSVREL (80 aa)) constitute an SH2; atypical domain. 2 positions are modified to phosphoserine: Ser499 and Ser525. One can recognise a Protein kinase 1 domain in the interval 589-875 (ITQLSHLGQG…LTRLQPHNLA (287 aa)). Tyr604 is subject to Phosphotyrosine. The disordered stretch occupies residues 610-629 (VEGSGDPEEGKMDDEDPLVP). The span at 614-626 (GDPEEGKMDDEDP) shows a compositional bias: acidic residues. Residue Ser884 is modified to Phosphoserine. The Protein kinase 2 domain maps to 897–1176 (LKKIRDLGEG…PILKTVHEKY (280 aa)). ATP contacts are provided by residues 903-911 (LGEGHFGKV) and Lys930. The active-site Proton acceptor is Asp1023. Tyr1054 is modified (phosphotyrosine; by autocatalysis). Tyr1055 bears the Phosphotyrosine mark.

This sequence belongs to the protein kinase superfamily. Tyr protein kinase family. JAK subfamily. As to quaternary structure, interacts (via FERM domain) with JAKMIP1. Interacts with PIK3R1; this interaction is important for cell migration. Interacts with MPL/TPOR. (Microbial infection) Interacts with Epstein-Barr virus protein LMP1; this interaction inhibits TYK2-mediated interferon signaling. In terms of assembly, (Microbial infection) Interacts with papillomavirus-18 protein E6; this interaction impairs JAK-STAT activation by interferon-alpha. As to quaternary structure, (Microbial infection) Interacts with Epstein-Barr virus (EBV) tegument protein BGLF2; this interaction participates in the inhibition of type I IFN signaling by the virus. In terms of processing, phosphorylated. Phosphorylation by JAK1 at Tyr-1054 and Tyr-1055 induces kinase activation. In terms of tissue distribution, observed in all cell lines analyzed. Expressed in a variety of lymphoid and non-lymphoid cell lines.

The enzyme catalyses L-tyrosyl-[protein] + ATP = O-phospho-L-tyrosyl-[protein] + ADP + H(+). With respect to regulation, the protein kinase 1 domain (also termed pseudokinase domain) mediates autoinhibition of the TYK2 kinase domain. In terms of biological role, tyrosine kinase of the non-receptor type involved in numerous cytokines and interferons signaling, which regulates cell growth, development, cell migration, innate and adaptive immunity. Plays both structural and catalytic roles in numerous interleukins and interferons (IFN-alpha/beta) signaling. Associates with heterodimeric cytokine receptor complexes and activates STAT family members including STAT1, STAT3, STAT4 or STAT6. The heterodimeric cytokine receptor complexes are composed of (1) a TYK2-associated receptor chain (IFNAR1, IL12RB1, IL10RB or IL13RA1), and (2) a second receptor chain associated either with JAK1 or JAK2. In response to cytokine-binding to receptors, phosphorylates and activates receptors (IFNAR1, IL12RB1, IL10RB or IL13RA1), creating docking sites for STAT members. In turn, recruited STATs are phosphorylated by TYK2 (or JAK1/JAK2 on the second receptor chain), form homo- and heterodimers, translocate to the nucleus, and regulate cytokine/growth factor responsive genes. Negatively regulates STAT3 activity by promototing phosphorylation at a specific tyrosine that differs from the site used for signaling. This Homo sapiens (Human) protein is Non-receptor tyrosine-protein kinase TYK2 (TYK2).